The chain runs to 141 residues: Putative nickel-responsive regulator (141 aa).

His80, His91, His93, and Cys99 together coordinate Ni(2+).

Belongs to the transcriptional regulatory CopG/NikR family. It depends on Ni(2+) as a cofactor.

In terms of biological role, transcriptional regulator. This Methanococcus maripaludis (strain C5 / ATCC BAA-1333) protein is Putative nickel-responsive regulator.